An 87-amino-acid polypeptide reads, in one-letter code: Small ribosomal subunit protein bS20 (87 aa).

The segment at 1-27 is disordered; the sequence is MANIKSAKKRAVTSEKRRKHNASRRSM.

The protein belongs to the bacterial ribosomal protein bS20 family.

Binds directly to 16S ribosomal RNA. In Erwinia tasmaniensis (strain DSM 17950 / CFBP 7177 / CIP 109463 / NCPPB 4357 / Et1/99), this protein is Small ribosomal subunit protein bS20.